A 215-amino-acid chain; its full sequence is MSLFYAKPEKAKMPTEKTALKGRNVPIETAAEHFVSGMPLAPPYPSNMQQCVFGLGCFWGAERKFWQLPGVYVTAVGYSAGFTPNPTYEEVCSGSTGHNEVVLVVYNPSQVSFKKLLAVFWESHNPTQGMRQGNDLGTQYRSGVYVYSDEQAEQAEHSKQVVQAMLTEKGYGEITTEIIKAKEFYFAEAYHQQYLAKNPNGYCGLGGTGIVVPCD.

C57 is an active-site residue.

This sequence belongs to the MsrA Met sulfoxide reductase family.

It catalyses the reaction L-methionyl-[protein] + [thioredoxin]-disulfide + H2O = L-methionyl-(S)-S-oxide-[protein] + [thioredoxin]-dithiol. It carries out the reaction [thioredoxin]-disulfide + L-methionine + H2O = L-methionine (S)-S-oxide + [thioredoxin]-dithiol. Has an important function as a repair enzyme for proteins that have been inactivated by oxidation. Catalyzes the reversible oxidation-reduction of methionine sulfoxide in proteins to methionine. The sequence is that of Peptide methionine sulfoxide reductase MsrA from Saccharophagus degradans (strain 2-40 / ATCC 43961 / DSM 17024).